The following is a 197-amino-acid chain: Peptidyl-tRNA hydrolase (197 aa).

Tyrosine 17 contacts tRNA. Residue histidine 22 is the Proton acceptor of the active site. The tRNA site is built by phenylalanine 68, asparagine 70, and asparagine 116.

Belongs to the PTH family. In terms of assembly, monomer.

The protein resides in the cytoplasm. The enzyme catalyses an N-acyl-L-alpha-aminoacyl-tRNA + H2O = an N-acyl-L-amino acid + a tRNA + H(+). Its function is as follows. Hydrolyzes ribosome-free peptidyl-tRNAs (with 1 or more amino acids incorporated), which drop off the ribosome during protein synthesis, or as a result of ribosome stalling. Catalyzes the release of premature peptidyl moieties from peptidyl-tRNA molecules trapped in stalled 50S ribosomal subunits, and thus maintains levels of free tRNAs and 50S ribosomes. The sequence is that of Peptidyl-tRNA hydrolase from Yersinia enterocolitica serotype O:8 / biotype 1B (strain NCTC 13174 / 8081).